The following is a 235-amino-acid chain: Thaumatin I (235 aa).

The signal sequence occupies residues 1–22 (MAATTCFFFLFPFLLLLTLSRA). Cystine bridges form between Cys31/Cys226, Cys78/Cys88, Cys93/Cys99, Cys143/Cys215, Cys148/Cys199, Cys156/Cys167, Cys171/Cys180, and Cys181/Cys186. A propeptide spans 230–235 (LELEDE) (removed in mature form).

This sequence belongs to the thaumatin family.

It localises to the cytoplasmic vesicle. Taste-modifying protein; intensely sweet-tasting. It is 100000 times sweeter than sucrose on a molar basis. In Thaumatococcus daniellii (Katemfe), this protein is Thaumatin I.